A 505-amino-acid chain; its full sequence is Glycerol kinase (505 aa).

Thr17 contacts ADP. Thr17, Thr18, and Ser19 together coordinate ATP. Thr17 is a sn-glycerol 3-phosphate binding site. Arg21 is an ADP binding site. Residues Arg87, Glu88, Tyr139, and Asp250 each coordinate sn-glycerol 3-phosphate. 5 residues coordinate glycerol: Arg87, Glu88, Tyr139, Asp250, and Gln251. ADP contacts are provided by Thr272 and Gly315. Residues Thr272, Gly315, Gln319, and Gly416 each coordinate ATP. The ADP site is built by Gly416 and Asn420.

Belongs to the FGGY kinase family.

The enzyme catalyses glycerol + ATP = sn-glycerol 3-phosphate + ADP + H(+). The protein operates within polyol metabolism; glycerol degradation via glycerol kinase pathway; sn-glycerol 3-phosphate from glycerol: step 1/1. With respect to regulation, inhibited by fructose 1,6-bisphosphate (FBP). Its function is as follows. Key enzyme in the regulation of glycerol uptake and metabolism. Catalyzes the phosphorylation of glycerol to yield sn-glycerol 3-phosphate. The protein is Glycerol kinase of Azotobacter vinelandii (strain DJ / ATCC BAA-1303).